A 311-amino-acid polypeptide reads, in one-letter code: Ribosomal RNA large subunit methyltransferase F (311 aa).

The protein belongs to the methyltransferase superfamily. METTL16/RlmF family.

Its subcellular location is the cytoplasm. It catalyses the reaction adenosine(1618) in 23S rRNA + S-adenosyl-L-methionine = N(6)-methyladenosine(1618) in 23S rRNA + S-adenosyl-L-homocysteine + H(+). Its function is as follows. Specifically methylates the adenine in position 1618 of 23S rRNA. The protein is Ribosomal RNA large subunit methyltransferase F of Pectobacterium carotovorum subsp. carotovorum (strain PC1).